Here is a 30-residue protein sequence, read N- to C-terminus: Cyclotide mden-E (30 aa).

A cross-link (cyclopeptide (Gly-Asn)) is located at residues 1-30 (GIPCGESCVYIPCITAAIGCSCKSKVCYRN). Disulfide bonds link C4–C20, C8–C22, and C13–C27.

It belongs to the cyclotide family. Bracelet subfamily. Post-translationally, this is a cyclic peptide.

Functionally, probably participates in a plant defense mechanism. The sequence is that of Cyclotide mden-E from Melicytus dentatus (Tree violet).